Reading from the N-terminus, the 228-residue chain is Triosephosphate isomerase (228 aa).

12–14 (NFK) contacts substrate. The Electrophile role is filled by histidine 96. The active-site Proton acceptor is glutamate 144. Substrate is bound by residues isoleucine 149, glycine 184, and 205-206 (AS).

The protein belongs to the triosephosphate isomerase family. As to quaternary structure, homotetramer; dimer of dimers.

The protein resides in the cytoplasm. The enzyme catalyses D-glyceraldehyde 3-phosphate = dihydroxyacetone phosphate. The protein operates within carbohydrate biosynthesis; gluconeogenesis. Its pathway is carbohydrate degradation; glycolysis; D-glyceraldehyde 3-phosphate from glycerone phosphate: step 1/1. In terms of biological role, involved in the gluconeogenesis. Catalyzes stereospecifically the conversion of dihydroxyacetone phosphate (DHAP) to D-glyceraldehyde-3-phosphate (G3P). The polypeptide is Triosephosphate isomerase (Pyrococcus furiosus (strain ATCC 43587 / DSM 3638 / JCM 8422 / Vc1)).